A 206-amino-acid chain; its full sequence is Imidazoleglycerol-phosphate dehydratase (206 aa).

The protein belongs to the imidazoleglycerol-phosphate dehydratase family.

It localises to the cytoplasm. The catalysed reaction is D-erythro-1-(imidazol-4-yl)glycerol 3-phosphate = 3-(imidazol-4-yl)-2-oxopropyl phosphate + H2O. It functions in the pathway amino-acid biosynthesis; L-histidine biosynthesis; L-histidine from 5-phospho-alpha-D-ribose 1-diphosphate: step 6/9. The sequence is that of Imidazoleglycerol-phosphate dehydratase from Leptospira interrogans serogroup Icterohaemorrhagiae serovar copenhageni (strain Fiocruz L1-130).